The sequence spans 650 residues: MFTFLKIILWLFSLALASAININDITFSNLEITPLTANKQPDQGWTATFDFSIADASSIREGDEFTLSMPHVYRIKLLNSSQTATISLADGTEAFKCYVSQQAAYLYENTTFTCTAQNDLSSYNTIDGSITFSLNFSDGGSSYEYELENAKFFKSGPMLVKLGNQMSDVVNFDPAAFTENVFHSGRSTGYGSFESYHLGMYCPNGYFLGGTEKIDYDSSNNNVDLDCSSVQVYSSNDFNDWWFPQSYNDTNADVTCFGSNLWITLDEKLYDGEMLWVNALQSLPANVNTIDHALEFQYTCLDTIANTTYATQFSTTREFIVYQGRNLGTASAKSSFISTTTTDLTSINTSAYSTGSISTVETGNRTTSEVISHVVTTSTKLSPTATTSLTIAQTSIYSTDSNITVGTDIHTTSEVISDVETISRETASTVVAAPTSTTGWTGAMNTYISQFTSSSFATINSTPIISSSAVFETSDASIVNVHTENITNTAAVPSEEPTFVNATRNSLNSFCSSKQPSSPSSYTSSPLVSSLSVSKTLLSTSFTPSVPTSNTYIKTKNTGYFEHTALTTSSVGLNSFSETAVSSQGTKIDTFLVSSLIAYPSSASGSQLSGIQQNFTSTSLMISTYEGKASIFFSAELGSIIFLLLSYLLF.

Residues Met1–Ala19 form the signal peptide. 4 N-linked (GlcNAc...) asparagine glycosylation sites follow: Asn79, Asn109, Asn135, and Asn248. An intrachain disulfide couples Cys97 to Cys114. Cys202 and Cys300 are disulfide-bonded. The ig-like fold domain important for alpha-agglutinin activity, contributing to a functional binding site for a-agglutinin stretch occupies residues Tyr216 to Tyr322. A glycan (O-linked (Man...) serine) is linked at Ser282. 3 O-linked (Man...) threonine glycosylation sites follow: Thr289, Thr299, and Thr303. Asn306 is a glycosylation site (N-linked (GlcNAc...) asparagine). 3 O-linked (Man...) threonine glycosylation sites follow: Thr307, Thr308, and Thr311. The O-linked (Man...) serine glycan is linked to Ser314. 3 O-linked (Man...) threonine glycosylation sites follow: Thr315, Thr316, and Thr329. O-linked (Man...) serine glycosylation is found at Ser331, Ser334, Ser335, and Ser338. 5 O-linked (Man...) threonine glycosylation sites follow: Thr339, Thr340, Thr341, Thr342, and Thr345. 2 consecutive repeat copies span residues Thr339–Ser378 and Thr384–Ser423. Positions Thr339–Ser423 are 2 X 40 AA tandem repeats. The O-linked (Man...) serine glycan is linked to Ser346. The O-linked (Man...) threonine glycan is linked to Thr349. O-linked (Man...) serine glycosylation occurs at Ser350. Residues Asn364, Asn402, Asn485, Asn501, and Asn614 are each glycosylated (N-linked (GlcNAc...) asparagine). A lipid anchor (GPI-anchor amidated glycine) is attached at Gly627. A propeptide spans Lys628–Phe650 (removed in mature form).

It to C.albicans ALS1. In terms of assembly, interacts with AGA2. N-glycosylated, and O-glycosylated by both PMT1 and PMT2. Post-translationally, the GPI-anchor is attached to the protein in the endoplasmic reticulum and serves to target the protein to the cell surface. There, the glucosamine-inositol phospholipid moiety is cleaved off and the GPI-modified mannoprotein is covalently attached via its lipidless GPI glycan remnant to the 1,6-beta-glucan of the outer cell wall layer.

It is found in the secreted. Its subcellular location is the cell wall. It localises to the membrane. Its function is as follows. Cell surface glycoprotein promoting cell-cell contact to facilitate mating. S.cerevisiae A and alpha cells express the complementary cell surface glycoproteins A-agglutinin and alpha-, respectively, which interact with one another to promote cellular aggregation during mating. In Saccharomyces cerevisiae (strain ATCC 204508 / S288c) (Baker's yeast), this protein is Alpha-agglutinin (SAG1).